Here is a 57-residue protein sequence, read N- to C-terminus: Large ribosomal subunit protein uL30 (57 aa).

Belongs to the universal ribosomal protein uL30 family. Part of the 50S ribosomal subunit.

The polypeptide is Large ribosomal subunit protein uL30 (Acholeplasma laidlawii (strain PG-8A)).